The following is a 255-amino-acid chain: Ribonuclease HII (255 aa).

The region spanning Arg58–Tyr247 is the RNase H type-2 domain. A divalent metal cation contacts are provided by Asp64, Glu65, and Asp156.

The protein belongs to the RNase HII family. Mn(2+) serves as cofactor. Requires Mg(2+) as cofactor.

It is found in the cytoplasm. The catalysed reaction is Endonucleolytic cleavage to 5'-phosphomonoester.. In terms of biological role, endonuclease that specifically degrades the RNA of RNA-DNA hybrids. This is Ribonuclease HII from Syntrophomonas wolfei subsp. wolfei (strain DSM 2245B / Goettingen).